The sequence spans 278 residues: Energy-coupling factor transporter ATP-binding protein EcfA1 (278 aa).

One can recognise an ABC transporter domain in the interval 5–239 (LLLESVSYQY…QDKLEAAGID (235 aa)). An ATP-binding site is contributed by 39–46 (GPNGSGKS).

The protein belongs to the ABC transporter superfamily. Energy-coupling factor EcfA family. As to quaternary structure, forms a stable energy-coupling factor (ECF) transporter complex composed of 2 membrane-embedded substrate-binding proteins (S component), 2 ATP-binding proteins (A component) and 2 transmembrane proteins (T component).

The protein localises to the cell membrane. Functionally, ATP-binding (A) component of a common energy-coupling factor (ECF) ABC-transporter complex. Unlike classic ABC transporters this ECF transporter provides the energy necessary to transport a number of different substrates. This is Energy-coupling factor transporter ATP-binding protein EcfA1 from Halalkalibacterium halodurans (strain ATCC BAA-125 / DSM 18197 / FERM 7344 / JCM 9153 / C-125) (Bacillus halodurans).